Consider the following 184-residue polypeptide: Large ribosomal subunit protein uL15 (184 aa).

Residues 1–45 (MDLSSLRPAKGAVKNKKRVGRGQGSGNGTTAGKGNNGQQSRSGYK) are disordered. Residues 21–35 (RGQGSGNGTTAGKGN) are compositionally biased toward gly residues.

This sequence belongs to the universal ribosomal protein uL15 family. As to quaternary structure, part of the 50S ribosomal subunit.

Functionally, binds to the 23S rRNA. The chain is Large ribosomal subunit protein uL15 from Pelodictyon phaeoclathratiforme (strain DSM 5477 / BU-1).